The sequence spans 572 residues: 2-succinyl-5-enolpyruvyl-6-hydroxy-3-cyclohexene-1-carboxylate synthase (572 aa).

Belongs to the TPP enzyme family. MenD subfamily. Homodimer. It depends on Mg(2+) as a cofactor. The cofactor is Mn(2+). Thiamine diphosphate serves as cofactor.

It carries out the reaction isochorismate + 2-oxoglutarate + H(+) = 5-enolpyruvoyl-6-hydroxy-2-succinyl-cyclohex-3-ene-1-carboxylate + CO2. Its pathway is quinol/quinone metabolism; 1,4-dihydroxy-2-naphthoate biosynthesis; 1,4-dihydroxy-2-naphthoate from chorismate: step 2/7. The protein operates within quinol/quinone metabolism; menaquinone biosynthesis. Its function is as follows. Catalyzes the thiamine diphosphate-dependent decarboxylation of 2-oxoglutarate and the subsequent addition of the resulting succinic semialdehyde-thiamine pyrophosphate anion to isochorismate to yield 2-succinyl-5-enolpyruvyl-6-hydroxy-3-cyclohexene-1-carboxylate (SEPHCHC). The polypeptide is 2-succinyl-5-enolpyruvyl-6-hydroxy-3-cyclohexene-1-carboxylate synthase (Shewanella amazonensis (strain ATCC BAA-1098 / SB2B)).